The chain runs to 577 residues: Aspartate--tRNA(Asp) ligase (577 aa).

Glu172 contacts L-aspartate. Residues 196–199 (QLFK) form an aspartate region. L-aspartate is bound at residue Arg218. ATP contacts are provided by residues 218–220 (RDE) and Gln227. Residue His438 coordinates L-aspartate. Residue Glu473 coordinates ATP. Arg480 provides a ligand contact to L-aspartate. 525–528 (GFDR) contacts ATP.

The protein belongs to the class-II aminoacyl-tRNA synthetase family. Type 1 subfamily. In terms of assembly, homodimer.

It localises to the cytoplasm. It catalyses the reaction tRNA(Asp) + L-aspartate + ATP = L-aspartyl-tRNA(Asp) + AMP + diphosphate. In terms of biological role, catalyzes the attachment of L-aspartate to tRNA(Asp) in a two-step reaction: L-aspartate is first activated by ATP to form Asp-AMP and then transferred to the acceptor end of tRNA(Asp). Is specific for tRNA(Asp) since it cannot aspartylate tRNA(Asn). The sequence is that of Aspartate--tRNA(Asp) ligase (aspS1) from Deinococcus radiodurans (strain ATCC 13939 / DSM 20539 / JCM 16871 / CCUG 27074 / LMG 4051 / NBRC 15346 / NCIMB 9279 / VKM B-1422 / R1).